Here is a 522-residue protein sequence, read N- to C-terminus: Sterol O-acyltransferase 2 (522 aa).

Disordered stretches follow at residues 1 to 36 (MEPG…HRAP) and 74 to 96 (SYPS…TQEP). The Cytoplasmic segment spans residues 1–120 (MEPGGARLRL…LDELMEVQHF (120 aa)). The span at 17 to 36 (GGERERQPCGDGNTETHRAP) shows a compositional bias: basic and acidic residues. Residue histidine 119 coordinates cholesterol. The chain crosses the membrane as a helical span at residues 121-142 (RTIYHMFIAGLCVFIISTLAID). The Lumenal portion of the chain corresponds to 143-162 (FIDEGRLLLEFDLLIFSFGQ). A helical transmembrane segment spans residues 163–188 (LPLALVTWVPMFLSTLLAPYQALRLW). The Cytoplasmic segment spans residues 189-196 (ARGTWTQA). The chain crosses the membrane as a helical span at residues 197–220 (TGLGCALLAAHAVVLCALPVHVAV). The Lumenal segment spans residues 221–228 (EHQLPPAS). A helical membrane pass occupies residues 229–252 (RCVLVFEQVRFLMKSYSFLREAVP). Topologically, residues 253–293 (GTLRARRGEGIQAPSFSSYLYFLFCPTLIYRETYPRTPYVR) are cytoplasmic. Cysteine sulfenic acid (-SOH); alternate is present on cysteine 277. Cysteine 277 is covalently cross-linked (Glycyl cysteine thioester (Cys-Gly) (interchain with G-Cter in ubiquitin); alternate). Residues 294-326 (WNYVAKNFAQALGCVLYACFILGRLCVPVFANM) traverse the membrane as a helical segment. Residues 327–343 (SREPFSTRALVLSILHA) are Lumenal-facing. The chain crosses the membrane as a helical span at residues 344–369 (TLPGIFMLLLIFFAFLHCWLNAFAEM). The Cytoplasmic segment spans residues 370 to 417 (LRFGDRMFYRDWWNSTSFSNYYRTWNVVVHDWLYSYVYQDGLRLLGAR). The FYXDWWN motif signature appears at 377–383 (FYRDWWN). Positions 389, 392, 395, 399, 407, and 430 each coordinate an acyl-CoA. A helical membrane pass occupies residues 418 to 442 (ARGVAMLGVFLVSAVAHEYIFCFVL). The active site involves histidine 434. Over 443–448 (GFFYPV) the chain is Lumenal. A helical membrane pass occupies residues 449–464 (MLILFLVIGGMLNFMM). The Cytoplasmic segment spans residues 465–470 (HDQRTG). The chain crosses the membrane as a helical span at residues 471–502 (PAWNVLMWTMLFLGQGIQVSLYCQEWYARRHC). The Lumenal portion of the chain corresponds to 503–522 (PLPQATFWGLVTPRSWSCHT).

This sequence belongs to the membrane-bound acyltransferase family. Sterol o-acyltransferase subfamily. In terms of assembly, may form homo- or heterodimers. Interacts with INSIG1; the interaction is direct and promotes association with AMFR/gp78. Post-translationally, polyubiquitinated by AMFR/gp78 at Cys-277, leading to its degradation when the lipid levels are low. Association with AMFR/gp78 is mediated via interaction with INSIG1. High concentration of cholesterol and fatty acid results in Cys-277 oxidation, preventing ubiquitination at the same site, resulting in protein stabilization. Oxidized at Cys-277: high concentration of cholesterol and fatty acid induce reactive oxygen species, which oxidizes Cys-277, preventing ubiquitination at the same site, and resulting in protein stabilization. In terms of tissue distribution, expression seems confined in hepatocytes and enterocytes.

The protein localises to the endoplasmic reticulum membrane. It catalyses the reaction a sterol + a long-chain fatty acyl-CoA = a long-chain 3-hydroxysterol ester + CoA. The catalysed reaction is cholesterol + an acyl-CoA = a cholesterol ester + CoA. It carries out the reaction cholesterol + (9Z)-octadecenoyl-CoA = cholesteryl (9Z-octadecenoate) + CoA. The enzyme catalyses (5Z,8Z,11Z,14Z,17Z)-eicosapentaenoyl-CoA + cholesterol = (5Z,8Z,11Z,14Z,17Z-eicosapentaenoyl)-cholesterol + CoA. It catalyses the reaction (9Z,12Z,15Z)-octadecatrienoyl-CoA + cholesterol = (9Z,12Z,15Z-octadecatrienoyl)-cholesterol + CoA. The catalysed reaction is (5Z,8Z,11Z,14Z)-eicosatetraenoyl-CoA + cholesterol = cholesteryl (5Z,8Z,11Z,14Z)-eicosatetraenoate + CoA. Its function is as follows. Catalyzes the formation of fatty acid-cholesterol esters, which are less soluble in membranes than cholesterol. Plays a role in lipoprotein assembly and dietary cholesterol absorption. Utilizes oleoyl-CoA ((9Z)-octadecenoyl-CoA) and linolenoyl-CoA ((9Z,12Z,15Z)-octadecatrienoyl-CoA) as substrates. May provide cholesteryl esters for lipoprotein secretion from hepatocytes and intestinal mucosa. Has lower enzymatic activity compared to isoform 1. The sequence is that of Sterol O-acyltransferase 2 from Homo sapiens (Human).